Here is a 122-residue protein sequence, read N- to C-terminus: Large ribosomal subunit protein uL14c (122 aa).

The protein belongs to the universal ribosomal protein uL14 family. Part of the 50S ribosomal subunit.

The protein localises to the plastid. The protein resides in the chloroplast. Functionally, binds to 23S rRNA. This chain is Large ribosomal subunit protein uL14c, found in Gracilaria tenuistipitata var. liui (Red alga).